Here is a 612-residue protein sequence, read N- to C-terminus: Heparan-sulfate 6-O-sulfotransferase 2 (612 aa).

Over 1 to 4 (MALP) the chain is Cytoplasmic. The helical; Signal-anchor for type II membrane protein transmembrane segment at 5–27 (AFAARALGPPLQPEQGAPARTTC) threads the bilayer. The tract at residues 9-52 (RALGPPLQPEQGAPARTTCPRRHSRVEAELAASRPGSVAASVRA) is disordered. Over 28-612 (PRRHSRVEAE…DYIGSVETWR (585 aa)) the chain is Lumenal. An N-linked (GlcNAc...) asparagine glycan is attached at asparagine 209. 233 to 241 (HIQKTGGTT) contacts 3'-phosphoadenylyl sulfate. Residues 263-264 (KK), arginine 280, tryptophan 285, and histidine 290 each bind substrate. Histidine 290 (proton acceptor) is an active-site residue. Arginine 325 and serine 333 together coordinate 3'-phosphoadenylyl sulfate. Positions 337 and 344 each coordinate substrate. Asparagine 404 carries N-linked (GlcNAc...) asparagine glycosylation. Residue 457-459 (TQY) participates in 3'-phosphoadenylyl sulfate binding. Asparagine 460 carries an N-linked (GlcNAc...) asparagine glycan. 463–464 (RA) lines the 3'-phosphoadenylyl sulfate pocket. The segment at 529–612 (HFQSQSQGQS…DYIGSVETWR (84 aa)) is disordered. Residues 531 to 564 (QSQSQGQSQSQSPGQNLSQNPNPNPNQNLTQNLS) are compositionally biased toward low complexity. N-linked (GlcNAc...) asparagine glycosylation is found at asparagine 546, asparagine 558, asparagine 562, asparagine 574, and asparagine 599. The span at 565–577 (HNLTPSSNPNSTQ) shows a compositional bias: polar residues.

The protein belongs to the sulfotransferase 6 family.

Its subcellular location is the membrane. It catalyses the reaction alpha-D-glucosaminyl-[heparan sulfate](n) + 3'-phosphoadenylyl sulfate = 6-sulfo-alpha-D-glucosaminyl-[heparan sulfate](n) + adenosine 3',5'-bisphosphate + H(+). Its function is as follows. 6-O-sulfation enzyme which catalyzes the transfer of sulfate from 3'-phosphoadenosine 5'-phosphosulfate (PAPS) to position 6 of the N-sulfoglucosamine residue (GlcNS) of heparan sulfate. The sequence is that of Heparan-sulfate 6-O-sulfotransferase 2 (Hs6st2) from Mus musculus (Mouse).